Here is a 193-residue protein sequence, read N- to C-terminus: Probable molybdenum cofactor guanylyltransferase (193 aa).

Residues 9–11 (TAG), K21, D64, and D93 contribute to the GTP site. A Mg(2+)-binding site is contributed by D93.

The protein belongs to the MobA family. The cofactor is Mg(2+).

The protein resides in the cytoplasm. The catalysed reaction is Mo-molybdopterin + GTP + H(+) = Mo-molybdopterin guanine dinucleotide + diphosphate. In terms of biological role, transfers a GMP moiety from GTP to Mo-molybdopterin (Mo-MPT) cofactor (Moco or molybdenum cofactor) to form Mo-molybdopterin guanine dinucleotide (Mo-MGD) cofactor. The polypeptide is Probable molybdenum cofactor guanylyltransferase (Deinococcus radiodurans (strain ATCC 13939 / DSM 20539 / JCM 16871 / CCUG 27074 / LMG 4051 / NBRC 15346 / NCIMB 9279 / VKM B-1422 / R1)).